A 963-amino-acid polypeptide reads, in one-letter code: Phosphoenolpyruvate carboxylase (963 aa).

At Ser11 the chain carries Phosphoserine. Residues His172 and Lys600 contribute to the active site.

The protein belongs to the PEPCase type 1 family. Homotetramer. It depends on Mg(2+) as a cofactor.

The protein resides in the cytoplasm. The enzyme catalyses oxaloacetate + phosphate = phosphoenolpyruvate + hydrogencarbonate. Its activity is regulated as follows. By light-reversible phosphorylation. In terms of biological role, through the carboxylation of phosphoenolpyruvate (PEP) it forms oxaloacetate, a four-carbon dicarboxylic acid source for the tricarboxylic acid cycle. The protein is Phosphoenolpyruvate carboxylase (PPC) of Picea abies (Norway spruce).